Consider the following 219-residue polypeptide: MVKYFLGQSVLRSSWDQVFAAFWQRYPNPYSKHVLTEDIVHREVTSDQKLLSRRLLTKTNRMPRWAERLFPANVAHSVYILEDSIVDPQNQTMTTFTWNINHARLMVVEERCVYRVNSDNSGWTEIRREAWVSSSLFGVSRAVQEFGLARFKSNVTKTMKGFEYILAKLQGEAPPKTLVETAKEAKEKAKETALAATEKAKDLASKAATKKQQQQQQFV.

The PRELI/MSF1 domain occupies 36 to 174 (TEDIVHREVT…ILAKLQGEAP (139 aa)).

Forms a complex with TRIAP1 in the mitochondrion intermembrane space. Interacts with OPA1 and AIFM1.

The protein localises to the mitochondrion. Its subcellular location is the mitochondrion intermembrane space. The enzyme catalyses a 1,2-diacyl-sn-glycero-3-phosphate(in) = a 1,2-diacyl-sn-glycero-3-phosphate(out). Involved in the modulation of the mitochondrial apoptotic pathway by ensuring the accumulation of cardiolipin (CL) in mitochondrial membranes. In vitro, the TRIAP1:PRELID1 complex mediates the transfer of phosphatidic acid (PA) between liposomes and probably functions as a PA transporter across the mitochondrion intermembrane space to provide PA for CL synthesis in the inner membrane. Regulates the mitochondrial apoptotic pathway in primary Th cells. Regulates Th cell differentiation by down-regulating STAT6 thereby reducing IL-4-induced Th2 cell number. May be important for the development of vital and immunocompetent organs. The sequence is that of PRELI domain-containing protein 1, mitochondrial (PRELID1) from Bos taurus (Bovine).